Consider the following 139-residue polypeptide: Ribonuclease P protein component (139 aa).

The protein belongs to the RnpA family. Consists of a catalytic RNA component (M1 or rnpB) and a protein subunit.

It catalyses the reaction Endonucleolytic cleavage of RNA, removing 5'-extranucleotides from tRNA precursor.. In terms of biological role, RNaseP catalyzes the removal of the 5'-leader sequence from pre-tRNA to produce the mature 5'-terminus. It can also cleave other RNA substrates such as 4.5S RNA. The protein component plays an auxiliary but essential role in vivo by binding to the 5'-leader sequence and broadening the substrate specificity of the ribozyme. This is Ribonuclease P protein component from Chlamydia felis (strain Fe/C-56) (Chlamydophila felis).